We begin with the raw amino-acid sequence, 822 residues long: Integrator complex assembly factor BRAT1 (822 aa).

The interval 100–200 is required for interaction with NDFIP1; that stretch reads LGLFGESGAP…WPMCAQKIVN (101 aa). HEAT repeat units follow at residues 495 to 531 and 544 to 576; these read LLFL…IRHW and SEVP…SSQG. Ser743 carries the post-translational modification Phosphoserine. Positions 820–822 match the BRAT1-like motif motif; sequence DCY. Residue Cys821 participates in Zn(2+) binding.

It belongs to the BRAT1 family. Part of the multiprotein complex composed of BRAT1, WDR73, as well as integrator complex subunits INTS9 and INTS11. Interacts with BRCA1 and ATM. Interacts with MTOR and RPTOR. Interacts with NDFIP1. Interacts with SMC1A and PRKDC. In terms of processing, ubiquitinated by NEDD4, NEDD4L and ITCH; mono- and polyubiquitinated forms are detected. As to expression, high levels detected in the cortex and much lower levels detected in the cerebellum, spinal cord and lung (at protein level).

The protein localises to the nucleus. The protein resides in the cytoplasm. Its function is as follows. Component of a multiprotein complex required for the assembly of the RNA endonuclease module of the integrator complex. Associates with INTS9 and INTS11 in the cytoplasm and blocks the active site of INTS11 to inhibit the endonuclease activity of INTS11 before formation of the full integrator complex. Following dissociation of WDR73 of the complex, BRAT1 facilitates the nuclear import of the INTS9-INTS11 heterodimer. In the nucleus, INTS4 is integrated to the INTS9-INTS11 heterodimer and BRAT1 is released from the mature RNA endonuclease module by inositol hexakisphosphate (InsP6). BRAT1 is also involved in DNA damage response; activates kinases ATM, SMC1A and PRKDC by modulating their phosphorylation status following ionizing radiation (IR) stress. Plays a role in regulating mitochondrial function and cell proliferation. Required for protein stability of MTOR and MTOR-related proteins, and cell cycle progress by growth factors. The sequence is that of Integrator complex assembly factor BRAT1 from Mus musculus (Mouse).